The following is a 45-amino-acid chain: C-phycocyanin beta subunit (45 aa).

The protein belongs to the phycobiliprotein family. Heterodimer of an alpha and a beta subunit. The hererodimer further assembles into trimers and the trimers into hexamers. Post-translationally, contains two covalently linked bilin chromophores.

The protein localises to the cellular thylakoid membrane. Light-harvesting photosynthetic bile pigment-protein from the phycobiliprotein complex (phycobilisome, PBS). Phycocyanin is the major phycobiliprotein in the PBS rod. The chain is C-phycocyanin beta subunit (cpcB) from Limnospira fusiformis (Arthrospira fusiformis).